The following is a 2727-amino-acid chain: E3 ubiquitin-protein ligase Ufd4 (2727 aa).

2 disordered regions span residues 247 to 271 (THSS…TNSD) and 365 to 389 (RGSN…TDRT). Residues 365–374 (RGSNNPNQGQ) show a composition bias toward polar residues. ANK repeat units follow at residues 422–451 (VGQT…DVNK), 453–482 (QRSS…YPDL), and 486–518 (DGKT…WMSP). The segment at 682 to 702 (AQRSSTSVVVAPRPTSDDPME) is disordered. The MIB/HERC2 domain occupies 1322–1392 (QIRAQLKHMT…KYDLKLADCE (71 aa)). Composition is skewed to polar residues over residues 1401 to 1430 (QSMG…STPS) and 1437 to 1448 (KNQNPEGASNQT). Disordered stretches follow at residues 1401-1448 (QSMG…SNQT), 1483-1512 (NTSS…GPSP), 1570-1592 (ESVT…REND), 1845-1871 (YPSL…QQSA), 1905-1930 (ALLG…DEYE), and 2092-2115 (STCL…ASTL). The segment covering 1575-1592 (SQSSSHPDVQSSSPREND) has biased composition (low complexity). Over residues 1909–1930 (DLDDEDDMDEDNDEEENEDEYE) the composition is skewed to acidic residues. Residues 2104–2115 (PDVSSKSGASTL) show a composition bias toward polar residues. The HECT domain occupies 2289-2727 (RKSVLEVEFL…ATKEKGFHLN (439 aa)). Cysteine 2696 acts as the Glycyl thioester intermediate in catalysis.

It belongs to the UPL family. K-HECT subfamily.

It catalyses the reaction S-ubiquitinyl-[E2 ubiquitin-conjugating enzyme]-L-cysteine + [acceptor protein]-L-lysine = [E2 ubiquitin-conjugating enzyme]-L-cysteine + N(6)-ubiquitinyl-[acceptor protein]-L-lysine.. It participates in protein modification; protein ubiquitination. Its function is as follows. E3 ubiquitin-protein ligase which accepts ubiquitin from an E2 ubiquitin-conjugating enzyme in the form of a thioester and then directly transfers the ubiquitin to targeted substrates. Involved in the negative regulation of the Ras/MAPK signaling pathway in the wing by acting with the E2 enzyme Unc6 and the putative E3 ligases poe and Kcmf1 to mediate the ubiquitination and proteasomal degradation of rl/MAPK. The protein is E3 ubiquitin-protein ligase Ufd4 of Drosophila melanogaster (Fruit fly).